Consider the following 543-residue polypeptide: CTP synthase (543 aa).

The interval 1-265 (MARYIFITGG…DDEVLAAFGI (265 aa)) is amidoligase domain. CTP is bound at residue serine 13. Residue serine 13 participates in UTP binding. Residue 14–19 (SLGKGL) participates in ATP binding. L-glutamine is bound at residue tyrosine 54. Aspartate 71 lines the ATP pocket. 2 residues coordinate Mg(2+): aspartate 71 and glutamate 139. CTP contacts are provided by residues 146-148 (DIE), 186-191 (KTKPTQ), and lysine 222. UTP contacts are provided by residues 186–191 (KTKPTQ) and lysine 222. 238–240 (RDV) is an ATP binding site. In terms of domain architecture, Glutamine amidotransferase type-1 spans 291–542 (TIAIVGKYTG…IQAAMVQSRL (252 aa)). Glycine 353 lines the L-glutamine pocket. Cysteine 380 functions as the Nucleophile; for glutamine hydrolysis in the catalytic mechanism. L-glutamine-binding positions include 381–384 (FGMQ), glutamate 404, and arginine 470. Catalysis depends on residues histidine 515 and glutamate 517.

This sequence belongs to the CTP synthase family. In terms of assembly, homotetramer.

It carries out the reaction UTP + L-glutamine + ATP + H2O = CTP + L-glutamate + ADP + phosphate + 2 H(+). It catalyses the reaction L-glutamine + H2O = L-glutamate + NH4(+). The catalysed reaction is UTP + NH4(+) + ATP = CTP + ADP + phosphate + 2 H(+). Its pathway is pyrimidine metabolism; CTP biosynthesis via de novo pathway; CTP from UDP: step 2/2. Allosterically activated by GTP, when glutamine is the substrate; GTP has no effect on the reaction when ammonia is the substrate. The allosteric effector GTP functions by stabilizing the protein conformation that binds the tetrahedral intermediate(s) formed during glutamine hydrolysis. Inhibited by the product CTP, via allosteric rather than competitive inhibition. Catalyzes the ATP-dependent amination of UTP to CTP with either L-glutamine or ammonia as the source of nitrogen. Regulates intracellular CTP levels through interactions with the four ribonucleotide triphosphates. The sequence is that of CTP synthase from Bradyrhizobium diazoefficiens (strain JCM 10833 / BCRC 13528 / IAM 13628 / NBRC 14792 / USDA 110).